A 514-amino-acid polypeptide reads, in one-letter code: ATP synthase subunit alpha (514 aa).

Position 170 to 177 (170 to 177 (GDRQTGKT)) interacts with ATP.

It belongs to the ATPase alpha/beta chains family. F-type ATPases have 2 components, CF(1) - the catalytic core - and CF(0) - the membrane proton channel. CF(1) has five subunits: alpha(3), beta(3), gamma(1), delta(1), epsilon(1). CF(0) has three main subunits: a(1), b(2) and c(9-12). The alpha and beta chains form an alternating ring which encloses part of the gamma chain. CF(1) is attached to CF(0) by a central stalk formed by the gamma and epsilon chains, while a peripheral stalk is formed by the delta and b chains.

Its subcellular location is the cell inner membrane. The enzyme catalyses ATP + H2O + 4 H(+)(in) = ADP + phosphate + 5 H(+)(out). Produces ATP from ADP in the presence of a proton gradient across the membrane. The alpha chain is a regulatory subunit. In Psychrobacter sp. (strain PRwf-1), this protein is ATP synthase subunit alpha.